Reading from the N-terminus, the 140-residue chain is MAHTMRVDVVSAEEEIFSGEAEFVALPGESGELGILPGHTPLITRIRPGAVRIKVTGQAEDEFVFVAGGILEVQPHVVTVLADTAIRGGDLDEAKAAEAKQLAEEALVNKESKIDYAQAQAELASAIAQLAAIQRLRQKR.

It belongs to the ATPase epsilon chain family. In terms of assembly, F-type ATPases have 2 components, CF(1) - the catalytic core - and CF(0) - the membrane proton channel. CF(1) has five subunits: alpha(3), beta(3), gamma(1), delta(1), epsilon(1). CF(0) has three main subunits: a, b and c.

It localises to the cell inner membrane. Functionally, produces ATP from ADP in the presence of a proton gradient across the membrane. This is ATP synthase epsilon chain from Janthinobacterium sp. (strain Marseille) (Minibacterium massiliensis).